Consider the following 134-residue polypeptide: S-adenosylmethionine decarboxylase proenzyme (134 aa).

The active-site Schiff-base intermediate with substrate; via pyruvic acid is Ser64. The residue at position 64 (Ser64) is a Pyruvic acid (Ser); by autocatalysis. The active-site Proton acceptor; for processing activity is His69. Cys84 functions as the Proton donor; for catalytic activity in the catalytic mechanism.

This sequence belongs to the prokaryotic AdoMetDC family. Type 1 subfamily. As to quaternary structure, heterotetramer of two alpha and two beta chains arranged as a dimer of alpha/beta heterodimers. Pyruvate is required as a cofactor. Is synthesized initially as an inactive proenzyme. Formation of the active enzyme involves a self-maturation process in which the active site pyruvoyl group is generated from an internal serine residue via an autocatalytic post-translational modification. Two non-identical subunits are generated from the proenzyme in this reaction, and the pyruvate is formed at the N-terminus of the alpha chain, which is derived from the carboxyl end of the proenzyme. The post-translation cleavage follows an unusual pathway, termed non-hydrolytic serinolysis, in which the side chain hydroxyl group of the serine supplies its oxygen atom to form the C-terminus of the beta chain, while the remainder of the serine residue undergoes an oxidative deamination to produce ammonia and the pyruvoyl group blocking the N-terminus of the alpha chain.

The enzyme catalyses S-adenosyl-L-methionine + H(+) = S-adenosyl 3-(methylsulfanyl)propylamine + CO2. Its pathway is amine and polyamine biosynthesis; S-adenosylmethioninamine biosynthesis; S-adenosylmethioninamine from S-adenosyl-L-methionine: step 1/1. Its function is as follows. Catalyzes the decarboxylation of S-adenosylmethionine to S-adenosylmethioninamine (dcAdoMet), the propylamine donor required for the synthesis of the polyamines spermine and spermidine from the diamine putrescine. This chain is S-adenosylmethionine decarboxylase proenzyme, found in Hydrogenobaculum sp. (strain Y04AAS1).